The sequence spans 255 residues: HTH-type transcriptional regulator SkgA (255 aa).

Positions 3–72 (VYTVKQMARL…LKDIQAALDQ (70 aa)) constitute an HTH merR-type domain. The segment at residues 6–25 (VKQMARLSGVSVRALHHYDA) is a DNA-binding region (H-T-H motif).

Its function is as follows. Regulates the induction of katG (catalase-peroxidase) in stationary phase. This is HTH-type transcriptional regulator SkgA (skgA) from Caulobacter vibrioides (strain ATCC 19089 / CIP 103742 / CB 15) (Caulobacter crescentus).